Here is a 343-residue protein sequence, read N- to C-terminus: Histone H1.8 (343 aa).

Residues 1–32 (MAPGSIASSDTSSSTSSSSTSSASSASAEGSS) are compositionally biased toward low complexity. Disordered regions lie at residues 1–50 (MAPG…VRAP) and 122–343 (ATGS…EAEG). Residues 52-130 (RHPPVLRMVL…GATGSFKLVP (79 aa)) enclose the H15 domain. Basic residues predominate over residues 132 to 142 (DKRKIPPRKTA). Composition is skewed to basic and acidic residues over residues 150–183 (EGKD…ERAA), 199–219 (QTKD…RPDK), and 235–247 (KVKE…ADTK). A Nuclear localization signal motif is present at residues 161-176 (KKDPANTVEVKKGSRK). Residues 253 to 265 (QPGSQSSKSTVTK) show a composition bias toward polar residues.

It belongs to the histone H1/H5 family. As to expression, oocyte (at protein level).

The protein localises to the cytoplasm. The protein resides in the nucleus. It localises to the chromosome. Its function is as follows. May play a key role in the control of gene expression during oogenesis and early embryogenesis, presumably through the perturbation of chromatin structure. Essential for meiotic maturation of germinal vesicle-stage oocytes. The somatic type linker histone H1c is rapidly replaced by H1oo in a donor nucleus transplanted into an oocyte. The greater mobility of H1oo as compared to H1c may contribute to this rapid replacement and increased instability of the embryonic chromatin structure. The rapid replacement of H1c with H1oo may play an important role in nuclear remodeling. The polypeptide is Histone H1.8 (Bos taurus (Bovine)).